We begin with the raw amino-acid sequence, 453 residues long: UDP-glucosyltransferase avaP (453 aa).

Belongs to the UDP-glycosyltransferase family.

The protein operates within secondary metabolite biosynthesis. UDP-glucosyltransferase; part of the cluster that mediates the biosynthesis of a highly modified cyclo-arginine-tryptophan dipeptide (cRW). The first step of the pathway is perfornmed by the arginine-containing cyclodipeptide synthase (RCPDS) avaA that acts as the scaffold-generating enzyme and is responsible for formation of the cyclo-Arg-Trp (cRW) diketopiperazine. AvaB then acts as a multifunctional flavoenzyme that is responsible for generating the cyclo-Arg-formylkynurenine DKP, which can be deformylated by avaC. AvaB then further catalyzes an additional N-oxidation followed by cyclization and dehydration. The next step is an N-acetylation of the guanidine group catalyzed by the arginine N-acetyltransferase avaD. The roles of the additional enzymes identified within the ava cluster still have to be determined. The polypeptide is UDP-glucosyltransferase avaP (Aspergillus versicolor).